Here is a 117-residue protein sequence, read N- to C-terminus: Small ribosomal subunit protein uS13 (117 aa).

Positions 94 to 117 (SLPLRGQRTKTNARTRKGPRRLIK) are disordered.

The protein belongs to the universal ribosomal protein uS13 family. As to quaternary structure, part of the 30S ribosomal subunit. Forms a loose heterodimer with protein S19. Forms two bridges to the 50S subunit in the 70S ribosome.

Its function is as follows. Located at the top of the head of the 30S subunit, it contacts several helices of the 16S rRNA. In the 70S ribosome it contacts the 23S rRNA (bridge B1a) and protein L5 of the 50S subunit (bridge B1b), connecting the 2 subunits; these bridges are implicated in subunit movement. Contacts the tRNAs in the A and P-sites. The sequence is that of Small ribosomal subunit protein uS13 from Vesicomyosocius okutanii subsp. Calyptogena okutanii (strain HA).